Consider the following 231-residue polypeptide: Small ribosomal subunit protein uS5 (231 aa).

The tract at residues 1–63 (MADLENKTVK…KSVDRANKVK (63 aa)) is disordered. Residues 29 to 60 (KRTESGAKKQIWEKRSAHDSKDMPKKSVDRAN) are compositionally biased toward basic and acidic residues. The 64-residue stretch at 75-138 (FSEKVVNISR…KDARNHLISV (64 aa)) folds into the S5 DRBM domain.

It belongs to the universal ribosomal protein uS5 family. Part of the 30S ribosomal subunit. Contacts proteins S4 and S8.

In terms of biological role, with S4 and S12 plays an important role in translational accuracy. Located at the back of the 30S subunit body where it stabilizes the conformation of the head with respect to the body. The chain is Small ribosomal subunit protein uS5 from Mycoplasmopsis agalactiae (strain NCTC 10123 / CIP 59.7 / PG2) (Mycoplasma agalactiae).